We begin with the raw amino-acid sequence, 804 residues long: Leucine--tRNA ligase (804 aa).

The 'HIGH' region motif lies at 39–50; that stretch reads PFPSGKGLHVGH. A 'KMSKS' region motif is present at residues 573–577; the sequence is KMSKS. ATP is bound at residue lysine 576.

Belongs to the class-I aminoacyl-tRNA synthetase family.

The protein localises to the cytoplasm. It carries out the reaction tRNA(Leu) + L-leucine + ATP = L-leucyl-tRNA(Leu) + AMP + diphosphate. This chain is Leucine--tRNA ligase, found in Lactobacillus johnsonii (strain CNCM I-12250 / La1 / NCC 533).